Reading from the N-terminus, the 96-residue chain is Small ribosomal subunit protein bS21 (96 aa).

A compositionally biased stretch (basic and acidic residues) spans 37–52 (EKPSEKKAREKAEAVR). A disordered region spans residues 37-96 (EKPSEKKAREKAEAVRRARKLARKKLQREGLLPSKPKPVFGADRGRGAAGGAGGAPRPAR). A compositionally biased stretch (basic residues) spans 53 to 62 (RARKLARKKL).

The protein belongs to the bacterial ribosomal protein bS21 family.

The sequence is that of Small ribosomal subunit protein bS21 from Afipia carboxidovorans (strain ATCC 49405 / DSM 1227 / KCTC 32145 / OM5) (Oligotropha carboxidovorans).